The chain runs to 107 residues: ATP synthase subunit c (107 aa).

Transmembrane regions (helical) follow at residues 4-24, 29-49, and 74-94; these read IVFL…SMNQ, FSIL…AIGM, and MFIA…IALI.

Belongs to the ATPase C chain family. In terms of assembly, F-type ATPases have 2 components, F(1) - the catalytic core - and F(0) - the membrane proton channel. F(1) has five subunits: alpha(3), beta(3), gamma(1), delta(1), epsilon(1). F(0) has three main subunits: a(1), b(2) and c(10-14). The alpha and beta chains form an alternating ring which encloses part of the gamma chain. F(1) is attached to F(0) by a central stalk formed by the gamma and epsilon chains, while a peripheral stalk is formed by the delta and b chains.

Its subcellular location is the cell inner membrane. F(1)F(0) ATP synthase produces ATP from ADP in the presence of a proton or sodium gradient. F-type ATPases consist of two structural domains, F(1) containing the extramembraneous catalytic core and F(0) containing the membrane proton channel, linked together by a central stalk and a peripheral stalk. During catalysis, ATP synthesis in the catalytic domain of F(1) is coupled via a rotary mechanism of the central stalk subunits to proton translocation. Functionally, key component of the F(0) channel; it plays a direct role in translocation across the membrane. A homomeric c-ring of between 10-14 subunits forms the central stalk rotor element with the F(1) delta and epsilon subunits. The sequence is that of ATP synthase subunit c from Campylobacter lari (strain RM2100 / D67 / ATCC BAA-1060).